Consider the following 39-residue polypeptide: MERTPNPNNQPVELNRTSLYLGLLLVFVLGILFSSYFFN.

The helical transmembrane segment at S18 to F38 threads the bilayer.

Belongs to the PsbL family. As to quaternary structure, PSII is composed of 1 copy each of membrane proteins PsbA, PsbB, PsbC, PsbD, PsbE, PsbF, PsbH, PsbI, PsbJ, PsbK, PsbL, PsbM, PsbT, PsbX, PsbY, PsbZ, Psb30/Ycf12, peripheral proteins PsbO, CyanoQ (PsbQ), PsbU, PsbV and a large number of cofactors. It forms dimeric complexes.

It is found in the cellular thylakoid membrane. One of the components of the core complex of photosystem II (PSII). PSII is a light-driven water:plastoquinone oxidoreductase that uses light energy to abstract electrons from H(2)O, generating O(2) and a proton gradient subsequently used for ATP formation. It consists of a core antenna complex that captures photons, and an electron transfer chain that converts photonic excitation into a charge separation. This subunit is found at the monomer-monomer interface and is required for correct PSII assembly and/or dimerization. The polypeptide is Photosystem II reaction center protein L (Trichormus variabilis (strain ATCC 29413 / PCC 7937) (Anabaena variabilis)).